The following is a 387-amino-acid chain: Lipid-A-disaccharide synthase (387 aa).

The protein belongs to the LpxB family.

The enzyme catalyses 2-N,3-O-bis[(3R)-3-hydroxytetradecanoyl]-alpha-D-glucosaminyl 1-phosphate + UDP-2-N,3-O-bis[(3R)-3-hydroxytetradecanoyl]-alpha-D-glucosamine = lipid A disaccharide (E. coli) + UDP + H(+). It catalyses the reaction a lipid X + a UDP-2-N,3-O-bis[(3R)-3-hydroxyacyl]-alpha-D-glucosamine = a lipid A disaccharide + UDP + H(+). Its pathway is glycolipid biosynthesis; lipid IV(A) biosynthesis; lipid IV(A) from (3R)-3-hydroxytetradecanoyl-[acyl-carrier-protein] and UDP-N-acetyl-alpha-D-glucosamine: step 5/6. Condensation of UDP-2,3-diacylglucosamine and 2,3-diacylglucosamine-1-phosphate to form lipid A disaccharide, a precursor of lipid A, a phosphorylated glycolipid that anchors the lipopolysaccharide to the outer membrane of the cell. In Blochmanniella pennsylvanica (strain BPEN), this protein is Lipid-A-disaccharide synthase.